The following is a 359-amino-acid chain: Putative B3 domain-containing protein At3g24850 (359 aa).

Disordered regions lie at residues 92-111 and 159-192; these read DSEIEDPQTSDSQMKTLQNS and EKMETKDPPNPLSLCLTGNTSRKRRAVEERKRTG. The segment covering 100 to 111 has biased composition (polar residues); that stretch reads TSDSQMKTLQNS. Positions 250 to 351 form a DNA-binding region, TF-B3; that stretch reads FNNLLQNDFL…VLCFAMEQSS (102 aa).

The protein resides in the nucleus. This Arabidopsis thaliana (Mouse-ear cress) protein is Putative B3 domain-containing protein At3g24850.